A 423-amino-acid chain; its full sequence is L-cysteine:1D-myo-inositol 2-amino-2-deoxy-alpha-D-glucopyranoside ligase (423 aa).

Residue Cys43 coordinates Zn(2+). Residues 43-46 (CGIT), Thr58, and 81-83 (NVT) contribute to the L-cysteinyl-5'-AMP site. Residues 45–55 (ITPYDATHMGH) carry the 'HIGH' region motif. Positions 199 to 204 (ERGGDP) match the 'ERGGDP' region motif. Trp240 lines the L-cysteinyl-5'-AMP pocket. Cys244 is a Zn(2+) binding site. An L-cysteinyl-5'-AMP-binding site is contributed by 262–264 (GSD). Residue His269 participates in Zn(2+) binding. Val295 lines the L-cysteinyl-5'-AMP pocket. The 'KMSKS' region motif lies at 301–305 (KMSKS).

This sequence belongs to the class-I aminoacyl-tRNA synthetase family. MshC subfamily. In terms of assembly, monomer. Zn(2+) serves as cofactor.

The enzyme catalyses 1D-myo-inositol 2-amino-2-deoxy-alpha-D-glucopyranoside + L-cysteine + ATP = 1D-myo-inositol 2-(L-cysteinylamino)-2-deoxy-alpha-D-glucopyranoside + AMP + diphosphate + H(+). In terms of biological role, catalyzes the ATP-dependent condensation of GlcN-Ins and L-cysteine to form L-Cys-GlcN-Ins. In Renibacterium salmoninarum (strain ATCC 33209 / DSM 20767 / JCM 11484 / NBRC 15589 / NCIMB 2235), this protein is L-cysteine:1D-myo-inositol 2-amino-2-deoxy-alpha-D-glucopyranoside ligase.